Here is a 180-residue protein sequence, read N- to C-terminus: NAD(P)H-quinone oxidoreductase subunit I, chloroplastic (180 aa).

4Fe-4S ferredoxin-type domains follow at residues 55–84 (GRIH…VHWR) and 95–124 (LNYS…MTEE). [4Fe-4S] cluster contacts are provided by Cys64, Cys67, Cys70, Cys74, Cys104, Cys107, Cys110, and Cys114.

Belongs to the complex I 23 kDa subunit family. NDH is composed of at least 16 different subunits, 5 of which are encoded in the nucleus. [4Fe-4S] cluster is required as a cofactor.

Its subcellular location is the plastid. The protein localises to the chloroplast thylakoid membrane. It catalyses the reaction a plastoquinone + NADH + (n+1) H(+)(in) = a plastoquinol + NAD(+) + n H(+)(out). It carries out the reaction a plastoquinone + NADPH + (n+1) H(+)(in) = a plastoquinol + NADP(+) + n H(+)(out). Functionally, NDH shuttles electrons from NAD(P)H:plastoquinone, via FMN and iron-sulfur (Fe-S) centers, to quinones in the photosynthetic chain and possibly in a chloroplast respiratory chain. The immediate electron acceptor for the enzyme in this species is believed to be plastoquinone. Couples the redox reaction to proton translocation, and thus conserves the redox energy in a proton gradient. This chain is NAD(P)H-quinone oxidoreductase subunit I, chloroplastic, found in Calycanthus floridus var. glaucus (Eastern sweetshrub).